Here is a 198-residue protein sequence, read N- to C-terminus: Protein UNCMA_24250 (198 aa).

In terms of domain architecture, AMMECR1 spans 5–194 (EDGTLAVKTA…ETEPGGPVIE (190 aa)).

The polypeptide is Protein UNCMA_24250 (Methanocella arvoryzae (strain DSM 22066 / NBRC 105507 / MRE50)).